A 338-amino-acid polypeptide reads, in one-letter code: Lipoate-protein ligase A (338 aa).

Residues 29-216 (PATQRVLFLW…AFFAHYGERV (188 aa)) enclose the BPL/LPL catalytic domain. ATP is bound by residues Arg-71, 76–79 (GAVF), and Lys-134. Lys-134 is a binding site for (R)-lipoate.

This sequence belongs to the LplA family. In terms of assembly, monomer.

Its subcellular location is the cytoplasm. It catalyses the reaction L-lysyl-[lipoyl-carrier protein] + (R)-lipoate + ATP = N(6)-[(R)-lipoyl]-L-lysyl-[lipoyl-carrier protein] + AMP + diphosphate + H(+). The protein operates within protein modification; protein lipoylation via exogenous pathway; protein N(6)-(lipoyl)lysine from lipoate: step 1/2. Its pathway is protein modification; protein lipoylation via exogenous pathway; protein N(6)-(lipoyl)lysine from lipoate: step 2/2. Catalyzes both the ATP-dependent activation of exogenously supplied lipoate to lipoyl-AMP and the transfer of the activated lipoyl onto the lipoyl domains of lipoate-dependent enzymes. This is Lipoate-protein ligase A from Salmonella agona (strain SL483).